Here is a 321-residue protein sequence, read N- to C-terminus: Lactamase-like protein notP (321 aa).

Zn(2+) contacts are provided by H108, H110, D112, and H113. D112 serves as the catalytic Proton donor/acceptor.

It belongs to the metallo-beta-lactamase superfamily. Zn(2+) is required as a cofactor.

In terms of biological role, lactamase-like protein; part of the gene cluster that mediates the biosynthesis of notoamide, a fungal indole alkaloid that belongs to a family of natural products containing a characteristic bicyclo[2.2.2]diazaoctane core. The first step of notoamide biosynthesis involves coupling of L-proline and L-tryptophan by the bimodular NRPS notE, to produce cyclo-L-tryptophan-L-proline called brevianamide F. The reverse prenyltransferase notF then acts as a deoxybrevianamide E synthase and converts brevianamide F to deoxybrevianamide E via reverse prenylation at C-2 of the indole ring leading to the bicyclo[2.2.2]diazaoctane core. Deoxybrevianamide E is further hydroxylated at C-6 of the indole ring, likely catalyzed by the cytochrome P450 monooxygenase notG, to yield 6-hydroxy-deoxybrevianamide E. 6-hydroxy-deoxybrevianamide E is a specific substrate of the prenyltransferase notC for normal prenylation at C-7 to produce 6-hydroxy-7-prenyl-deoxybrevianamide, also called notoamide S. As the proposed pivotal branching point in notoamide biosynthesis, notoamide S can be diverted to notoamide E through an oxidative pyran ring closure putatively catalyzed by either notH cytochrome P450 monooxygenase or the notD FAD-linked oxidoreductase. This step would be followed by an indole 2,3-epoxidation-initiated pinacol-like rearrangement catalyzed by the notB FAD-dependent monooxygenase leading to the formation of notoamide C and notoamide D. On the other hand notoamide S is converted to notoamide T by notH (or notD), a bifunctional oxidase that also functions as the intramolecular Diels-Alderase responsible for generation of (+)-notoamide T. To generate antipodal (-)-notoaminide T, notH' (or notD') in Aspergillus versicolor is expected to catalyze a Diels-Alder reaction leading to the opposite stereochemistry. The remaining oxidoreductase notD (or notH) likely catalyzes the oxidative pyran ring formation to yield (+)-stephacidin A. The FAD-dependent monooxygenase notI is highly similar to notB and is predicted to catalyze a similar conversion from (+)-stephacidin A to (-)-notoamide B via the 2,3-epoxidation of (+)-stephacidin A followed by a pinacol-type rearrangement. Finally, it remains unclear which enzyme could be responsible for the final hydroxylation steps leading to notoamide A and sclerotiamide. The function of notP in the notoamide biosynthesis has not been determined yet. This is Lactamase-like protein notP from Aspergillus sp. (strain MF297-2).